Consider the following 489-residue polypeptide: 3-octaprenyl-4-hydroxybenzoate carboxy-lyase (489 aa).

Residue Asn172 coordinates Mn(2+). Residues 175-177 (IYR), 189-191 (RWL), and 194-195 (RG) contribute to the prenylated FMN site. Glu238 is a binding site for Mn(2+). Asp287 (proton donor) is an active-site residue.

This sequence belongs to the UbiD family. As to quaternary structure, homohexamer. Requires prenylated FMN as cofactor. Mn(2+) serves as cofactor.

It is found in the cell membrane. The catalysed reaction is a 4-hydroxy-3-(all-trans-polyprenyl)benzoate + H(+) = a 2-(all-trans-polyprenyl)phenol + CO2. Its pathway is cofactor biosynthesis; ubiquinone biosynthesis. Its function is as follows. Catalyzes the decarboxylation of 3-octaprenyl-4-hydroxy benzoate to 2-octaprenylphenol, an intermediate step in ubiquinone biosynthesis. The sequence is that of 3-octaprenyl-4-hydroxybenzoate carboxy-lyase from Salmonella arizonae (strain ATCC BAA-731 / CDC346-86 / RSK2980).